The chain runs to 98 residues: Sm-like protein LSM8 (98 aa).

A Sm domain is found at alanine 2–glutamate 78.

This sequence belongs to the snRNP Sm proteins family. As to quaternary structure, component of the heptameric LSM2-LSM8 complex that forms a seven-membered ring structure with a donut shape. The LSM subunits are arranged in the order LSM8, LSM2, LSM3, LSM6, LSM5, LSM7 and LSM4. LSM8 subunit interacts only with its two neighboring subunits, LSM2 and LSM4. Interacts with the prefoldin co-chaperone subunits PFD1, PFD2, PFD3, PFD4, PFD5 and PFD6. As to expression, expressed in roots, leaves, stems, flowers and siliques.

Its subcellular location is the nucleus. Its function is as follows. Component of the nuclear LSM2-LSM8 complex which is involved splicing nuclear mRNAs. LSM2-LSM8 binds directly to the U6 small nuclear RNAs (snRNAs). LSM8 is essential for the formation of the nuclear LSM2-LSM8 complex involved in the accurate splicing of selected development-related mRNAs through the stabilization of the spliceosomal U6 snRNA. Plays a critical role in the regulation of development-related gene expression. This is Sm-like protein LSM8 from Arabidopsis thaliana (Mouse-ear cress).